We begin with the raw amino-acid sequence, 392 residues long: Gastricsin (392 aa).

A signal peptide spans 1–16 (MKWMVVALLCLPLLEA). Residues 17-62 (SLLRVPLRKMKSIRETMKEQGVLKDFLKTHKYDPGQKYHFGNFGDY) constitute a propeptide, activation peptide. The 314-residue stretch at 76–389 (YFGEISIGTP…DMGNNKVGLA (314 aa)) folds into the Peptidase A1 domain. Residue Asp-94 is part of the active site. 2 disulfides stabilise this stretch: Cys-107-Cys-112 and Cys-270-Cys-275. Asp-280 is a catalytic residue. Cys-314 and Cys-347 are disulfide-bonded.

This sequence belongs to the peptidase A1 family.

The protein resides in the secreted. The enzyme catalyses More restricted specificity than pepsin A, but shows preferential cleavage at Tyr-|-Xaa bonds. High activity on hemoglobin.. Its function is as follows. Hydrolyzes a variety of proteins. This Rattus norvegicus (Rat) protein is Gastricsin (Pgc).